A 296-amino-acid chain; its full sequence is Methylsterol monooxygenase 1 (296 aa).

A run of 2 helical transmembrane segments spans residues 55-75 and 100-120; these read LLVH…FQFI and TLIF…YYFT. A Fatty acid hydroxylase domain is found at 145-274; it reads CAVIEDAWHY…FTWWDRIFGT (130 aa). The short motif at 157 to 161 is the Histidine box-1 element; that stretch reads HRLLH. Residues 170 to 174 carry the Histidine box-2 motif; it reads HKVHH. Residues 199 to 219 form a helical membrane-spanning segment; the sequence is FFIGIVVFCNHVVLLWAWVIC. A Histidine box-3 motif is present at residues 249–255; that stretch reads FHDFHHM.

It belongs to the sterol desaturase family. Fe cation is required as a cofactor.

It is found in the endoplasmic reticulum membrane. It carries out the reaction 4,4-dimethyl-5alpha-cholest-7-en-3beta-ol + 6 Fe(II)-[cytochrome b5] + 3 O2 + 5 H(+) = 4alpha-carboxy-4beta-methyl-5alpha-cholest-7-ene-3beta-ol + 6 Fe(III)-[cytochrome b5] + 4 H2O. The protein operates within steroid biosynthesis; zymosterol biosynthesis; zymosterol from lanosterol: step 3/6. In terms of biological role, catalyzes the first step in the removal of the two C-4 methyl groups of 4,4-dimethylzymosterol. This is Methylsterol monooxygenase 1 (MSMO1) from Gallus gallus (Chicken).